A 452-amino-acid polypeptide reads, in one-letter code: Peptidoglycan DL-endopeptidase CwlO (452 aa).

The N-terminal stretch at 1–30 (MKKKVYTFGLASILGTASLFTPFMNNTASA) is a signal peptide. Residues 28–38 (ASAETSQQKQE) show a composition bias toward polar residues. Disordered stretches follow at residues 28-53 (ASAETSQQKQEIQQKRSEVNSGIESK) and 258-317 (AAAA…GSVV). 2 stretches are compositionally biased toward basic and acidic residues: residues 39–53 (IQQKRSEVNSGIESK) and 263–275 (KAKEESATAEKSD). Positions 276–317 (SGSSSSSNSGSVSKSDGSSNSGSSSSKKSSSPSRNYSSGSVV) are enriched in low complexity. Residues 321 to 450 (GNAIEAAIST…KAFNGVVRRV (130 aa)) form the NlpC/P60 domain. The Nucleophile role is filled by Cys358. Residue His410 is the Proton acceptor of the active site. Asn422 is an active-site residue.

It belongs to the peptidase C40 family.

The protein localises to the secreted. Functionally, shows a cell wall hydrolytic DL-endopeptidase activity. The protein is Peptidoglycan DL-endopeptidase CwlO (cwlO) of Bacillus licheniformis (strain ATCC 14580 / DSM 13 / JCM 2505 / CCUG 7422 / NBRC 12200 / NCIMB 9375 / NCTC 10341 / NRRL NRS-1264 / Gibson 46).